A 177-amino-acid chain; its full sequence is uncharacterized protein (177 aa).

This is an uncharacterized protein from Schizosaccharomyces pombe (strain 972 / ATCC 24843) (Fission yeast).